Here is a 146-residue protein sequence, read N- to C-terminus: Ribonuclease H (146 aa).

One can recognise an RNase H type-1 domain in the interval Met-1–Glu-141. Mg(2+) is bound by residues Asp-9, Glu-47, Asp-69, and Asp-133. Residues His-123–Arg-146 are disordered. Basic and acidic residues predominate over residues Gly-125–Arg-146.

The protein belongs to the RNase H family. As to quaternary structure, monomer. Mg(2+) serves as cofactor.

It localises to the cytoplasm. It catalyses the reaction Endonucleolytic cleavage to 5'-phosphomonoester.. Endonuclease that specifically degrades the RNA of RNA-DNA hybrids. This Agrobacterium fabrum (strain C58 / ATCC 33970) (Agrobacterium tumefaciens (strain C58)) protein is Ribonuclease H.